The chain runs to 222 residues: Latexin (222 aa).

The 97-residue stretch at 1–97 folds into the Cystatin LXN-type 1 domain; sequence MEIPPTNYPA…NFTFEGETGK (97 aa). The residue at position 55 (lysine 55) is an N6-acetyllysine. The tract at residues 98 to 117 is alpha-helical linker; the sequence is NPDEEDNTFYQRLKSMKEPL. The 105-residue stretch at 118–222 folds into the Cystatin LXN-type 2 domain; sequence EAQNIPDNFG…SRLPKEVQLE (105 aa).

The protein belongs to the protease inhibitor I47 (latexin) family. Highly expressed in heart, prostate, ovary, kidney, pancreas, and colon, moderate or low in other tissues including brain.

Its subcellular location is the cytoplasm. In terms of biological role, hardly reversible, non-competitive, and potent inhibitor of CPA1, CPA2 and CPA4. May play a role in inflammation. The polypeptide is Latexin (LXN) (Homo sapiens (Human)).